Reading from the N-terminus, the 177-residue chain is Large ribosomal subunit protein uL6 (177 aa).

It belongs to the universal ribosomal protein uL6 family. Part of the 50S ribosomal subunit.

This protein binds to the 23S rRNA, and is important in its secondary structure. It is located near the subunit interface in the base of the L7/L12 stalk, and near the tRNA binding site of the peptidyltransferase center. This is Large ribosomal subunit protein uL6 from Rhizobium meliloti (strain 1021) (Ensifer meliloti).